The chain runs to 271 residues: Peroxisomal biogenesis factor 2 (271 aa).

The Peroxisomal matrix portion of the chain corresponds to M1–S2. Residues R3–N29 traverse the membrane as a helical segment. Residues T30–H33 are Cytoplasmic-facing. Residues K34–C60 traverse the membrane as a helical segment. Residues T61–T77 lie on the Peroxisomal matrix side of the membrane. The chain crosses the membrane as a helical span at residues L78–F97. The Cytoplasmic portion of the chain corresponds to N98–H101. Residues C102–A133 form a helical membrane-spanning segment. Topologically, residues E134 to G175 are peroxisomal matrix. The helical transmembrane segment at L176–L197 threads the bilayer. The Cytoplasmic segment spans residues T198–Y271. Residues C222, C225, C237, C238, C243, C246, C256, and C259 each contribute to the Zn(2+) site. An RING-type zinc finger spans residues C222 to C259.

Belongs to the pex2/pex10/pex12 family. Component of the PEX2-PEX10-PEX12 retrotranslocation channel, composed of PEX2, PEX10 and PEX12.

It localises to the peroxisome membrane. The enzyme catalyses [E2 ubiquitin-conjugating enzyme]-S-ubiquitinyl-L-cysteine + [acceptor protein]-L-cysteine = [E2 ubiquitin-conjugating enzyme]-L-cysteine + [acceptor protein]-S-ubiquitinyl-L-cysteine.. It functions in the pathway protein modification; protein ubiquitination. Functionally, E3 ubiquitin-protein ligase component of a retrotranslocation channel required for peroxisome organization by mediating export of the PEX5 receptor from peroxisomes to the cytosol, thereby promoting PEX5 recycling. The retrotranslocation channel is composed of PEX2, PEX10 and PEX12; each subunit contributing transmembrane segments that coassemble into an open channel that specifically allows the passage of PEX5 through the peroxisomal membrane. PEX2 also regulates peroxisome organization by acting as a E3 ubiquitin-protein ligase. PEX2 ubiquitinates PEX5 during its passage through the retrotranslocation channel: catalyzes monoubiquitination of PEX5 at 'Cys-6', a modification that acts as a signal for PEX5 extraction into the cytosol. The chain is Peroxisomal biogenesis factor 2 from Saccharomyces cerevisiae (strain ATCC 204508 / S288c) (Baker's yeast).